Here is a 209-residue protein sequence, read N- to C-terminus: Large ribosomal subunit protein uL3 (209 aa).

This sequence belongs to the universal ribosomal protein uL3 family. Part of the 50S ribosomal subunit. Forms a cluster with proteins L14 and L19.

In terms of biological role, one of the primary rRNA binding proteins, it binds directly near the 3'-end of the 23S rRNA, where it nucleates assembly of the 50S subunit. This Carboxydothermus hydrogenoformans (strain ATCC BAA-161 / DSM 6008 / Z-2901) protein is Large ribosomal subunit protein uL3.